We begin with the raw amino-acid sequence, 336 residues long: Tryptophan--tRNA ligase (336 aa).

ATP is bound by residues 9 to 11 (QPS) and 17 to 18 (GN). A 'HIGH' region motif is present at residues 10–18 (PSGTPTIGN). Position 134 (Asp134) interacts with L-tryptophan. ATP-binding positions include 146-148 (GDD), Ile189, and 198-202 (KMSKS). The 'KMSKS' region signature appears at 198–202 (KMSKS).

The protein belongs to the class-I aminoacyl-tRNA synthetase family. Homodimer.

It localises to the cytoplasm. The enzyme catalyses tRNA(Trp) + L-tryptophan + ATP = L-tryptophyl-tRNA(Trp) + AMP + diphosphate + H(+). Functionally, catalyzes the attachment of tryptophan to tRNA(Trp). The polypeptide is Tryptophan--tRNA ligase (Enterococcus faecalis (strain ATCC 700802 / V583)).